An 823-amino-acid polypeptide reads, in one-letter code: Semaphorin-4B (823 aa).

The signal sequence occupies residues 1 to 30; that stretch reads MGRASRSAVLRRALLLLLLLLLLRTTTTRA. The Extracellular portion of the chain corresponds to 31–703; the sequence is LGPRISVPLG…WGADKSYWNE (673 aa). One can recognise a Sema domain in the interval 34–510; that stretch reads RISVPLGSEE…SHSGVVQVPV (477 aa). 3 N-linked (GlcNAc...) asparagine glycosylation sites follow: Asn53, Asn56, and Asn83. The cysteines at positions 107 and 118 are disulfide-linked. A glycan (N-linked (GlcNAc...) asparagine) is linked at Asn129. 3 disulfide bridges follow: Cys136–Cys145, Cys273–Cys386, and Cys297–Cys346. Asn397 and Asn512 each carry an N-linked (GlcNAc...) asparagine glycan. Positions 512–582 constitute a PSI domain; the sequence is NCSLYPTCGD…RFLVPGKPCK (71 aa). The cysteines at positions 513 and 530 are disulfide-linked. Residues Asn567, Asn615, and Asn680 are each glycosylated (N-linked (GlcNAc...) asparagine). The Ig-like C2-type domain occupies 589–649; it reads NTVNTLACPL…FQCWSIEEGF (61 aa). The cysteines at positions 596 and 642 are disulfide-linked. A helical transmembrane segment spans residues 704 to 724; that stretch reads FLVMCTLFVFAMVLLFLFFLY. Over 725–823 the chain is Cytoplasmic; it reads RHRDGMKLFL…LGSEIRDSVV (99 aa). Residues Ser779, Ser780, Ser804, and Ser816 each carry the phosphoserine modification.

Belongs to the semaphorin family. As to quaternary structure, interacts with GIPC PDZ domain.

It localises to the membrane. Its function is as follows. Inhibits axonal extension by providing local signals to specify territories inaccessible for growing axons. The sequence is that of Semaphorin-4B from Mus musculus (Mouse).